The chain runs to 594 residues: Protein TRANSPORT INHIBITOR RESPONSE 1 (594 aa).

An F-box domain is found at 3–50; that stretch reads KRIALSFPEEVLEHVFSFIQLDKDRNSVSLVCKSWYEIERWCRRKVFI. Lys-74 provides a ligand contact to 1D-myo-inositol hexakisphosphate. Residues 81–82 are interaction with auxin-responsive proteins; that stretch reads DF. 1D-myo-inositol hexakisphosphate is bound by residues 113–114 and Arg-344; that span reads KR. The tract at residues 347–352 is interaction with auxin-responsive proteins; that stretch reads PSEPFV. 401-403 contributes to the 1D-myo-inositol hexakisphosphate binding site; sequence RFR. Arg-403 provides a ligand contact to (indol-3-yl)acetate. The tract at residues 405 to 409 is interaction with auxin-responsive proteins; sequence CIIEP. A 1D-myo-inositol hexakisphosphate-binding site is contributed by Arg-436. A (indol-3-yl)acetate-binding site is contributed by 438-439; the sequence is SL. The interval 464 to 465 is interaction with auxin-responsive proteins; it reads AF. Residues 484–485 and Arg-509 contribute to the 1D-myo-inositol hexakisphosphate site; that span reads RK.

In terms of assembly, interacts with auxin. Part of a SCF E3 ubiquitin ligase complex SCF(TIR1) composed of SKP1, CUL1, RBX1 and TIR1. SCF(TIR1) interacts with the COP9 signalosome (CSN) complex. Interacts with Aux/IAA proteins (IAA3, IAA7, IAA12 and IAA17) in an auxin-dependent manner. The interaction with IAA3, a negative regulator of auxin responses, is promoted by auxin, but repressed by juglon (5-hydroxy-1,4-naphthoquinone). Interactions with auxin-responsive proteins is inactivated by auxin antagonists. Expressed in roots, stems, leaves and flowers. In adult plants, mostly expressed in floral stigma, anther filaments, abscission zones and vascular tissues.

It localises to the nucleus. The protein operates within protein modification; protein ubiquitination. In terms of biological role, auxin receptor that mediates Aux/IAA proteins proteasomal degradation and auxin-regulated transcription. The SCF(TIR1) E3 ubiquitin ligase complex is involved in auxin-mediated signaling pathway that regulate root and hypocotyl growth, lateral root formation, cell elongation, and gravitropism. Appears to allow pericycle cells to overcome G2 arrest prior to lateral root development. Plays a role in ethylene signaling in roots. Confers sensitivity to the virulent bacterial pathogen P.syringae. This is Protein TRANSPORT INHIBITOR RESPONSE 1 (TIR1) from Arabidopsis thaliana (Mouse-ear cress).